A 434-amino-acid chain; its full sequence is F-box/FBD/LRR-repeat protein At3g26920 (434 aa).

The F-box domain occupies Glu16–Phe65. LRR repeat units follow at residues Leu69 to Met95, Asp100 to Val125, Thr145 to Glu172, Val173 to Gln198, Val219 to Gly244, Ile265 to Val290, and Thr315 to Asp341. Positions Lys353–Ser403 constitute an FBD domain.

This chain is F-box/FBD/LRR-repeat protein At3g26920, found in Arabidopsis thaliana (Mouse-ear cress).